A 137-amino-acid chain; its full sequence is Ribosomal RNA large subunit methyltransferase H (137 aa).

S-adenosyl-L-methionine is bound by residues L56, G85, and 104-109 (LSPLTF).

This sequence belongs to the RNA methyltransferase RlmH family. In terms of assembly, homodimer.

Its subcellular location is the cytoplasm. The enzyme catalyses pseudouridine(1915) in 23S rRNA + S-adenosyl-L-methionine = N(3)-methylpseudouridine(1915) in 23S rRNA + S-adenosyl-L-homocysteine + H(+). Functionally, specifically methylates the pseudouridine at position 1915 (m3Psi1915) in 23S rRNA. The chain is Ribosomal RNA large subunit methyltransferase H from Prochlorococcus marinus subsp. pastoris (strain CCMP1986 / NIES-2087 / MED4).